The primary structure comprises 525 residues: GMP synthase [glutamine-hydrolyzing] (525 aa).

Residues 12–206 (RILIIDFGSQ…THGICGCGGD (195 aa)) form the Glutamine amidotransferase type-1 domain. Catalysis depends on cysteine 90, which acts as the Nucleophile. Residues histidine 180 and glutamate 182 contribute to the active site. Residues 207-399 (WTMAAFKDQA…LGLPDEMVGR (193 aa)) enclose the GMPS ATP-PPase domain. 234 to 240 (SGGVDSS) is an ATP binding site.

In terms of assembly, homodimer.

The catalysed reaction is XMP + L-glutamine + ATP + H2O = GMP + L-glutamate + AMP + diphosphate + 2 H(+). It functions in the pathway purine metabolism; GMP biosynthesis; GMP from XMP (L-Gln route): step 1/1. In terms of biological role, catalyzes the synthesis of GMP from XMP. The polypeptide is GMP synthase [glutamine-hydrolyzing] (Rhodospirillum rubrum (strain ATCC 11170 / ATH 1.1.1 / DSM 467 / LMG 4362 / NCIMB 8255 / S1)).